The sequence spans 247 residues: UPF0309 protein Lm4b_02611 (247 aa).

One can recognise an SIS domain in the interval 31-214 (VAESIENDGV…ETMVNDNFTP (184 aa)).

This sequence belongs to the UPF0309 family.

This Listeria monocytogenes serotype 4b (strain CLIP80459) protein is UPF0309 protein Lm4b_02611.